We begin with the raw amino-acid sequence, 2134 residues long: MSKLFSTVGRTVDEVLSVLNDEDTESYAGPDRTAVVGGGFLTTVDQSSVSTATMGSLQDVQYRTAVDIPGSRVTQGERFFLIDQREWNSTQSEWQLLGKIDIVKELLDQSYAVDGLLKYHSYARFGLDVIVQINPTSFQAGGLIAALVPYDQVDIESIAAMTTYCHGKLNCNINNVVRMKVPYIYSRGCYNLRNSAYSIWMLVIRVWSRLQLGSGTSTQITITTLARFVDLELHGLSPLVAQMMRNEFRLSSSSNIVNLANYEDARAKVSLALGQEGFSRDSSSTGGGMLYHFSQWTSIPCLAFIFTFPGTVGPGTRIWSTTVDPFSCNLRAFSTVHPTNLSSIAGMFCFWRGDIVFEFQVFRTKYHSGRLMFVYVPGDENTKISTLTATQASSGLTAVFDINGVNSTLVFRCPFISDTPYRVNPTTHKSPWPYATGKLVCYVYNRLNAPASVSPSVSINVYKSAVDLELYAPVYGVSPTNTSVFAQGKGDEGGFSSVPEVEQHVVEDKEPQGPLHVTPFGAVKAMEDPQLARKTPGTFPELAPGKPRHTVDHMDLYKFMGRAHYLWGHKFTKTDMQYTFQIPLSPIKEGFVTGTLRWFLSLFQLYRGSLDITMTFAGKTNVDGIVYFVPEGVAIETERKEQTPLLTLNYKTSVGAIRFNTGQTTNVQFRIPFYTPLEHIATHSKNAMDSVLGAITTQITNYSAQDEYLQVTYYISFNEDSQFSVPRAVPVVSSFTDTSSKTVMNTYWLDDDELVEESSHFSFDEIEEAQCSKCKIDLGDIVSCSGEKAKHFGVYVGDGVVHVDPEGNATSWFMKRKATVKKSKNLDKWCFALSPRIDRTLICETANLMVGREVEYDIFVKNCETYARGIASGDYGTKEGEKWKTLLSAVGVAAMTTTMMAMRHELLDTSLTKLPQKVGEVTDEVRKILEDTSAGVREFKEKVSSILRKTWPGKTSIKIMKWTCRIVKMCVGVGLCYMHGWDSKTVTAVVTMFSMDFLDLVIDGIEIGRMIIDELTTPKAQGLSEINQVLSIAKNAKDVIKMLIEIFCKVIERITGEHGKKIQWAQDKKEEIMNVLERAEKWITTSDDHSEGIECLKLVRSIQSVIRGEESLKELAGELRAVGTHVLNKLGRLDKPNAPILVRAEPTVLYLYGNRGGGKSLASMAIAVKLCKELGISHVEGIYTKPIMSDFWDGYAGQPVVIMDDLGQSTSDEDWTNFCQLVSSCPLRLNMANLEKKGTQFNSPFIIASSNLSHPCPKTVYCTDAIARRLHIKVKVSPKEEFSTHAMLDVAKAKKVGAYCNLDCLDLQKISDLASTPVSVQDIVLEMLHTNVDKQTLMGDIIQYWAQSNPREVFDTMAEGKNSGKYLWLFERLKTSKWYILGCVGAVLAVSALGVFAYHMIKNHFRDQQHDQSAYSVAIKPLRVVRLEQSDAQSVVDISNVVHGNLVRVGVGPNEARIHWLYNGLGVYDTYILMPYHGIKDADVDDDLYIERAGTIYSTNMKMVQVLFLESREGDLVLINVPRLPKFRDIRNHFSTEENIRRAEGMPGTLCTLDHERFTLVTESDLKMVEAATYVCEDDKGVRTDISVGRSWKAKACTVAGMCGGALVTSNNKMQNAIVGIHVAGGAHAISRVITKEMIEEMLKTRAQCSRIWKTEFVEEKISVGSKTKYHKSPLYDFCPQEVVKCPTKLFYQGEIDVMQVMLAKYSSPIVSEPSGYATVVEAYTNRMVSFFPEPRQLTYDECINGIEGLDAIDLKTSAGFPYNTLGLRKSDLIINGKMAHRLQQDVEKMEEDLHMNRSIQVVFTTCAKDELRPLSKVMLGKTRAIEACPVSFTILFRRYLGYALAQIQSHPGFHTGIAVGVDPDQDWHCMWYSIVTQCDLVVGLDFSNYDASLSPFMIYHAGRVLGQICGLDPRLVDRIMEPIVNSVHQLGSMRYYVHGSMPSGTPATSVLNSIINVVNICYVLCALEEISVFEVFKLFKILTYGDDVLLCIKKEYLDQKSFPLSSFVQGLEELGLSPTGADKMEVKVTPVHKMSFLKRTFYVDEWSICHPRISEETVYSMLAWKSDNASMKDLIETSIWFMFHHGPRKYVRFCTWLRGVLCRVGIGLYIPTYKELEVRYDRLVKYRFIDDNF.

Topologically, residues 1–1377 (MSKLFSTVGR…WLFERLKTSK (1377 aa)) are cytoplasmic. The LRAT domain occupies 781 to 882 (IVSCSGEKAK…GDYGTKEGEK (102 aa)). Residues His791 and His802 contribute to the active site. Catalysis depends on Cys863, which acts as the Acyl-thioester intermediate. One can recognise an SF3 helicase domain in the interval 1127-1289 (LNKLGRLDKP…EEFSTHAMLD (163 aa)). Residue 1153–1160 (GNRGGGKS) coordinates ATP. Residues 1378–1392 (WYILGCVGAVLAVSA) lie within the membrane without spanning it. Topologically, residues 1393 to 2134 (LGVFAYHMIK…VKYRFIDDNF (742 aa)) are cytoplasmic. Residue Tyr1415 is modified to O-(5'-phospho-RNA)-tyrosine. In terms of domain architecture, Peptidase C3 spans 1431 to 1643 (DAQSVVDISN…ITKEMIEEML (213 aa)). Catalysis depends on for protease 3C activity residues His1477, Asp1515, and Cys1603. The region spanning 1880–2001 (DLVVGLDFSN…CIKKEYLDQK (122 aa)) is the RdRp catalytic domain.

The protein belongs to the picornaviridae polyprotein family. In terms of processing, specific enzymatic cleavages by the viral protease in vivo yield a variety of precursors and mature proteins. During virion maturation, non-infectious particles are rendered infectious following cleavage of VP0. This maturation cleavage is followed by a conformational change of the particle. Post-translationally, VPg is uridylylated by the polymerase and is covalently linked to the 5'-end of genomic RNA. This uridylylated form acts as a nucleotide-peptide primer for the polymerase.

The protein localises to the virion. It is found in the host cytoplasm. It localises to the host cytoplasmic vesicle membrane. It carries out the reaction RNA(n) + a ribonucleoside 5'-triphosphate = RNA(n+1) + diphosphate. It catalyses the reaction a ribonucleoside 5'-triphosphate + H2O = a ribonucleoside 5'-diphosphate + phosphate + H(+). The enzyme catalyses Selective cleavage of Gln-|-Gly bond in the poliovirus polyprotein. In other picornavirus reactions Glu may be substituted for Gln, and Ser or Thr for Gly.. Functionally, capsid proteins VP1, VP2, and VP3 form a closed capsid enclosing the viral positive strand RNA genome. All these proteins contain a beta-sheet structure called beta-barrel jelly roll. Together they form an icosahedral capsid (T=3) composed of 60 copies of each VP1, VP2, and VP3, with a diameter of approximately 300 Angstroms. VP1 is situated at the 12 fivefold axes, whereas VP2 and VP3 are located at the quasi-sixfold axes. VP0 precursor is a component of immature procapsids. The N-terminal domain of VP0, protein VP4, is needed for the assembly of 12 pentamers into the icosahedral structure. Unlike other picornaviruses, AEV VP4 may not be myristoylated. In terms of biological role, protein 2B and 2BC precursor affect membrane integrity and cause an increase in membrane permeability. Its function is as follows. Associates with and induces structural rearrangements of intracellular membranes. It displays RNA-binding, nucleotide binding and NTPase activities. Functionally, protein 3A, via its hydrophobic domain, serves as membrane anchor. Protein 3B is covalently linked to the 5'-end of both the positive-strand and negative-strand genomic RNAs. It acts as a genome-linked replication primer. In terms of biological role, cysteine protease that generates mature viral proteins from the precursor polyprotein. In addition to its proteolytic activity, it binds to viral RNA, and thus influences viral genome replication. RNA and substrate bind cooperatively to the protease. Its function is as follows. RNA-directed RNA polymerase 3D-POL replicates genomic and antigenomic RNA by recognizing replications specific signals. In Avian encephalomyelitis virus (strain Van Reokel) (AEV), this protein is Genome polyprotein.